The primary structure comprises 79 residues: uncharacterized protein (79 aa).

This is an uncharacterized protein from Caenorhabditis elegans.